A 178-amino-acid polypeptide reads, in one-letter code: Protein GrpE (178 aa).

The disordered stretch occupies residues 1-22; it reads MSENQNPSPSPEEIEAAMSANA.

Belongs to the GrpE family. Homodimer.

The protein resides in the cytoplasm. In terms of biological role, participates actively in the response to hyperosmotic and heat shock by preventing the aggregation of stress-denatured proteins, in association with DnaK and GrpE. It is the nucleotide exchange factor for DnaK and may function as a thermosensor. Unfolded proteins bind initially to DnaJ; upon interaction with the DnaJ-bound protein, DnaK hydrolyzes its bound ATP, resulting in the formation of a stable complex. GrpE releases ADP from DnaK; ATP binding to DnaK triggers the release of the substrate protein, thus completing the reaction cycle. Several rounds of ATP-dependent interactions between DnaJ, DnaK and GrpE are required for fully efficient folding. The chain is Protein GrpE from Acidovorax ebreus (strain TPSY) (Diaphorobacter sp. (strain TPSY)).